We begin with the raw amino-acid sequence, 323 residues long: Aldo-keto reductase family 1 member C13 (323 aa).

NAD(+) contacts are provided by residues 20–24 (GFGTY), D50, and Y55. The active-site Proton donor is Y55. Substrate is bound at residue H117. Residues 166–167 (SN), Q190, 216–224 (YGALGTQRY), and 270–280 (QSFKENEMREN) contribute to the NAD(+) site.

The protein belongs to the aldo/keto reductase family.

Catalyzes the dehydrogenation of 17-beta-hydroxysteroids. May also exhibit significant activity with a variety of cyclic and alicyclic alcohols. Uses both NAD and NADP, but the activity is much greater with NAD than with NADP. This Mus musculus (Mouse) protein is Aldo-keto reductase family 1 member C13 (Akr1c13).